A 556-amino-acid polypeptide reads, in one-letter code: Arginine--tRNA ligase (556 aa).

The short motif at 132–142 (VNPTGDLHLGH) is the 'HIGH' region element.

This sequence belongs to the class-I aminoacyl-tRNA synthetase family. In terms of assembly, monomer.

It localises to the cytoplasm. It carries out the reaction tRNA(Arg) + L-arginine + ATP = L-arginyl-tRNA(Arg) + AMP + diphosphate. The polypeptide is Arginine--tRNA ligase (Oceanobacillus iheyensis (strain DSM 14371 / CIP 107618 / JCM 11309 / KCTC 3954 / HTE831)).